Consider the following 122-residue polypeptide: Large ribosomal subunit protein uL14 (122 aa).

Belongs to the universal ribosomal protein uL14 family. As to quaternary structure, part of the 50S ribosomal subunit. Forms a cluster with proteins L3 and L19. In the 70S ribosome, L14 and L19 interact and together make contacts with the 16S rRNA in bridges B5 and B8.

In terms of biological role, binds to 23S rRNA. Forms part of two intersubunit bridges in the 70S ribosome. In Stutzerimonas stutzeri (strain A1501) (Pseudomonas stutzeri), this protein is Large ribosomal subunit protein uL14.